The sequence spans 68 residues: Large ribosomal subunit protein uL30 (68 aa).

Belongs to the universal ribosomal protein uL30 family. Part of the 50S ribosomal subunit.

In Pseudarthrobacter chlorophenolicus (strain ATCC 700700 / DSM 12829 / CIP 107037 / JCM 12360 / KCTC 9906 / NCIMB 13794 / A6) (Arthrobacter chlorophenolicus), this protein is Large ribosomal subunit protein uL30.